We begin with the raw amino-acid sequence, 162 residues long: Regulator of sigma D (162 aa).

Belongs to the Rsd/AlgQ family. As to quaternary structure, interacts with RpoD.

The protein localises to the cytoplasm. Functionally, binds RpoD and negatively regulates RpoD-mediated transcription activation by preventing the interaction between the primary sigma factor RpoD with the catalytic core of the RNA polymerase and with promoter DNA. May be involved in replacement of the RNA polymerase sigma subunit from RpoD to RpoS during the transition from exponential growth to the stationary phase. This is Regulator of sigma D from Salmonella typhi.